The primary structure comprises 400 residues: Enoyl-[acyl-carrier-protein] reductase [NADH] (400 aa).

Residues 48–53, 74–75, 111–112, and 139–140 each bind NAD(+); these read GASTGY, FE, DA, and LA. Tyr-225 provides a ligand contact to substrate. The active-site Proton donor is the Tyr-235. NAD(+)-binding positions include Lys-244 and 273 to 275; that span reads VVT.

The protein belongs to the TER reductase family. As to quaternary structure, monomer.

The catalysed reaction is a 2,3-saturated acyl-[ACP] + NAD(+) = a (2E)-enoyl-[ACP] + NADH + H(+). The protein operates within lipid metabolism; fatty acid biosynthesis. In terms of biological role, involved in the final reduction of the elongation cycle of fatty acid synthesis (FAS II). Catalyzes the reduction of a carbon-carbon double bond in an enoyl moiety that is covalently linked to an acyl carrier protein (ACP). This chain is Enoyl-[acyl-carrier-protein] reductase [NADH], found in Burkholderia cenocepacia (strain HI2424).